The primary structure comprises 119 residues: V-type proton ATPase subunit F (119 aa).

This sequence belongs to the V-ATPase F subunit family. V-ATPase is a heteromultimeric enzyme composed of a peripheral catalytic V1 complex (components A to H) attached to an integral membrane V0 proton pore complex (components: a, c, c', c'', d, e, f and VOA1).

The protein resides in the vacuole membrane. Subunit of the V1 complex of vacuolar(H+)-ATPase (V-ATPase), a multisubunit enzyme composed of a peripheral complex (V1) that hydrolyzes ATP and a membrane integral complex (V0) that translocates protons. V-ATPase is responsible for acidifying and maintaining the pH of intracellular compartments. The sequence is that of V-type proton ATPase subunit F (VMA7) from Vanderwaltozyma polyspora (strain ATCC 22028 / DSM 70294 / BCRC 21397 / CBS 2163 / NBRC 10782 / NRRL Y-8283 / UCD 57-17) (Kluyveromyces polysporus).